Consider the following 238-residue polypeptide: Serine protease SplE (238 aa).

The first 36 residues, 1-36 (MNKNIIIKSIAALTILTSVTGVGTTMVEGIQQTAKA), serve as a signal peptide directing secretion. Residues His-75, Asp-113, and Ser-191 each act as charge relay system in the active site.

Belongs to the peptidase S1B family.

Its subcellular location is the secreted. In Staphylococcus aureus, this protein is Serine protease SplE (splE).